The sequence spans 245 residues: Folate receptor gamma (245 aa).

The first 22 residues, 1 to 22 (MDMAWQMMQLLLLALVTAAGSA), serve as a signal peptide directing secretion. Disulfide bonds link Cys-37-Cys-65, Cys-57-Cys-105, Cys-66-Cys-109, Cys-89-Cys-175, Cys-96-Cys-146, Cys-135-Cys-209, Cys-139-Cys-189, and Cys-152-Cys-169. Residues Asp-103 and Tyr-107 each coordinate folate. Asn-121 carries N-linked (GlcNAc...) asparagine glycosylation. Residues 124-128 (WRKER), 157-162 (HKGWNW), and Ser-196 each bind folate. N-linked (GlcNAc...) asparagine glycosylation is present at Asn-161. Residue Asn-201 is glycosylated (N-linked (GlcNAc...) asparagine).

Belongs to the folate receptor family. As to expression, spleen, thymus, bone marrow, ovarian carcinoma, and uterine carcinoma.

It is found in the secreted. Its function is as follows. Binds to folate and reduced folic acid derivatives and mediates delivery of 5-methyltetrahydrofolate to the interior of cells. Isoform Short does not bind folate. The protein is Folate receptor gamma (FOLR3) of Homo sapiens (Human).